A 431-amino-acid chain; its full sequence is Acetylornithine aminotransferase (431 aa).

Pyridoxal 5'-phosphate is bound by residues 118-119 and Phe157; that span reads GA. Arg160 serves as a coordination point for N(2)-acetyl-L-ornithine. Position 251–254 (251–254) interacts with pyridoxal 5'-phosphate; it reads DEVQ. Residue Lys284 is modified to N6-(pyridoxal phosphate)lysine. N(2)-acetyl-L-ornithine is bound at residue Ser313. Position 314 (Thr314) interacts with pyridoxal 5'-phosphate.

This sequence belongs to the class-III pyridoxal-phosphate-dependent aminotransferase family. ArgD subfamily. Homodimer. The cofactor is pyridoxal 5'-phosphate.

The protein resides in the cytoplasm. It catalyses the reaction N(2)-acetyl-L-ornithine + 2-oxoglutarate = N-acetyl-L-glutamate 5-semialdehyde + L-glutamate. It participates in amino-acid biosynthesis; L-arginine biosynthesis; N(2)-acetyl-L-ornithine from L-glutamate: step 4/4. In Bifidobacterium longum (strain NCC 2705), this protein is Acetylornithine aminotransferase.